A 355-amino-acid polypeptide reads, in one-letter code: Protein RecA (355 aa).

67-74 is an ATP binding site; the sequence is GPESSGKT.

This sequence belongs to the RecA family.

The protein localises to the cytoplasm. Functionally, can catalyze the hydrolysis of ATP in the presence of single-stranded DNA, the ATP-dependent uptake of single-stranded DNA by duplex DNA, and the ATP-dependent hybridization of homologous single-stranded DNAs. It interacts with LexA causing its activation and leading to its autocatalytic cleavage. In Shewanella baltica (strain OS223), this protein is Protein RecA.